The following is a 111-amino-acid chain: Iron-sulfur cluster insertion protein ErpA (111 aa).

C39, C103, and C105 together coordinate iron-sulfur cluster.

It belongs to the HesB/IscA family. As to quaternary structure, homodimer. Iron-sulfur cluster serves as cofactor.

Functionally, required for insertion of 4Fe-4S clusters for at least IspG. The protein is Iron-sulfur cluster insertion protein ErpA of Acinetobacter baumannii (strain SDF).